The chain runs to 495 residues: UPF0371 protein CE2832 (495 aa).

Belongs to the UPF0371 family.

This Corynebacterium efficiens (strain DSM 44549 / YS-314 / AJ 12310 / JCM 11189 / NBRC 100395) protein is UPF0371 protein CE2832.